The chain runs to 407 residues: E3 ubiquitin-protein ligase TRIM13 (407 aa).

Residues 10-58 form an RING-type zinc finger; it reads CPICCSLFDDPRVLPCSHNFCKKCLEGLLEGNVRNSLWRPSPFKCPTCR. The B box-type zinc finger occupies 89–131; it reads PKMPVCKGHLGQPLNIFCVTDMQLICGICATRGEHTKHVFSSI. Zn(2+) contacts are provided by cysteine 94, histidine 97, cysteine 117, and histidine 123. A coiled-coil region spans residues 172-200; sequence LQLLTKDSDKVKEFFEKLQHTLDQKKNEI. The chain crosses the membrane as a helical span at residues 316–336; it reads LLLMMVVLLGLLIFFGPTVFL.

This sequence belongs to the TRIM/RBCC family. In terms of assembly, interacts (via C-terminal domain) with VCP. Interacts with AKT1; the interaction ubiquitinates AKT1 and leads to its proteasomal degradation. Interacts with MDM2; the interaction ubiquitinates AKT1 and leads to its proteasomal degradation. Interacts with p62/SQSTM1. Interacts with TRAF6. Interacts with IKBKG/NEMO. In terms of processing, auto-ubiquitinated; requires the RING-type zinc finger. Auto-polyubiquitination leads to proteasomal degradation.

It is found in the endoplasmic reticulum membrane. It catalyses the reaction S-ubiquitinyl-[E2 ubiquitin-conjugating enzyme]-L-cysteine + [acceptor protein]-L-lysine = [E2 ubiquitin-conjugating enzyme]-L-cysteine + N(6)-ubiquitinyl-[acceptor protein]-L-lysine.. It participates in protein modification; protein ubiquitination. In terms of biological role, endoplasmic reticulum (ER) membrane anchored E3 ligase involved in the retrotranslocation and turnover of membrane and secretory proteins from the ER through a set of processes named ER-associated degradation (ERAD). This process acts on misfolded proteins as well as in the regulated degradation of correctly folded proteins. Enhances ionizing radiation-induced p53/TP53 stability and apoptosis via ubiquitinating MDM2 and AKT1 and decreasing AKT1 kinase activity through MDM2 and AKT1 proteasomal degradation. Regulates ER stress-induced autophagy, and may act as a tumor suppressor. Also plays a role in innate immune response by stimulating NF-kappa-B activity in the TLR2 signaling pathway. Ubiquitinates TRAF6 via the 'Lys-29'-linked polyubiquitination chain resulting in NF-kappa-B activation. Participates as well in T-cell receptor-mediated NF-kappa-B activation. In the presence of TNF, modulates the IKK complex by regulating IKBKG/NEMO ubiquitination leading to the repression of NF-kappa-B. The chain is E3 ubiquitin-protein ligase TRIM13 (Trim13) from Mus musculus (Mouse).